The primary structure comprises 171 residues: PBAN-type neuropeptides (171 aa).

The first 22 residues, 1 to 22, serve as a signal peptide directing secretion; the sequence is MFRLYFFFNVICIFLAIRSAIG. The propeptide occupies 23 to 47; that stretch reads GEVPDATEQKINNFLASGKDSEDLS. The residue at position 59 (Leu59) is a Leucine amide. Residues 63 to 111 constitute a propeptide that is removed on maturation; the sequence is TIASELHDEMMDEIDDNPLYYSGESPQRVASEIAQGTPYVVLLLTGRVL. The tract at residues 120 to 151 is disordered; that stretch reads HSTTPRLGRRDASSSNENNSRPPFAPRLGRNL. Leu126, Leu147, and Leu157 each carry leucine amide. Positions 160–171 are excised as a propeptide; that stretch reads SFGAPVVDNFAY.

This sequence belongs to the pyrokinin family.

Its subcellular location is the secreted. Its function is as follows. A hormone that controls sex pheromone production in females and pheromone responsiveness in male. Also mediates visceral muscle contractile activity (myotropic activity). This chain is PBAN-type neuropeptides, found in Aedes aegypti (Yellowfever mosquito).